Consider the following 184-residue polypeptide: Endoribonuclease YbeY (184 aa).

2 stretches are compositionally biased toward acidic residues: residues 1 to 11 and 19 to 29; these read MTVEVGADENP and DGAGDESDDED. A disordered region spans residues 1-37; it reads MTVEVGADENPDFAHDETDGAGDESDDEDAQGRDPEL. Zn(2+)-binding residues include histidine 146, histidine 150, and histidine 156.

It belongs to the endoribonuclease YbeY family. Zn(2+) is required as a cofactor.

It localises to the cytoplasm. Single strand-specific metallo-endoribonuclease involved in late-stage 70S ribosome quality control and in maturation of the 3' terminus of the 16S rRNA. The protein is Endoribonuclease YbeY of Burkholderia mallei (strain ATCC 23344).